A 396-amino-acid chain; its full sequence is Acetate kinase (396 aa).

Asn7 provides a ligand contact to Mg(2+). An ATP-binding site is contributed by Lys14. Position 88 (Arg88) interacts with substrate. Catalysis depends on Asp145, which acts as the Proton donor/acceptor. Residues 203–207, 278–280, and 326–330 each bind ATP; these read HAGNG, DAR, and GIGEN. Mg(2+) is bound at residue Glu379.

This sequence belongs to the acetokinase family. As to quaternary structure, homodimer. It depends on Mg(2+) as a cofactor. The cofactor is Mn(2+).

The protein resides in the cytoplasm. The catalysed reaction is acetate + ATP = acetyl phosphate + ADP. Its pathway is metabolic intermediate biosynthesis; acetyl-CoA biosynthesis; acetyl-CoA from acetate: step 1/2. Its function is as follows. Catalyzes the formation of acetyl phosphate from acetate and ATP. Can also catalyze the reverse reaction. In Phytoplasma australiense, this protein is Acetate kinase.